Consider the following 207-residue polypeptide: Lipid A acyltransferase PagP (207 aa).

The first 24 residues, 1 to 24 (MKFDLTTAYTLSIPLLASSGTVLA), serve as a signal peptide directing secretion. Residues His79, Asp122, and Ser123 contribute to the active site.

It belongs to the lipid A palmitoyltransferase family. In terms of assembly, homodimer.

The protein localises to the cell outer membrane. The catalysed reaction is a lipid A + a 1,2-diacyl-sn-glycero-3-phosphocholine = a hepta-acyl lipid A + a 2-acyl-sn-glycero-3-phosphocholine. The enzyme catalyses a lipid IVA + a 1,2-diacyl-sn-glycero-3-phosphocholine = a lipid IVB + a 2-acyl-sn-glycero-3-phosphocholine. It catalyses the reaction a lipid IIA + a 1,2-diacyl-sn-glycero-3-phosphocholine = a lipid IIB + a 2-acyl-sn-glycero-3-phosphocholine. Its function is as follows. Transfers a fatty acid residue from the sn-1 position of a phospholipid to the N-linked hydroxyfatty acid chain on the proximal unit of lipid A or its precursors. The chain is Lipid A acyltransferase PagP from Photorhabdus asymbiotica subsp. asymbiotica (strain ATCC 43949 / 3105-77) (Xenorhabdus luminescens (strain 2)).